Reading from the N-terminus, the 451-residue chain is Probable tyrosyl-DNA phosphodiesterase (451 aa).

A disordered region spans residues 1 to 34 (MKRTIQETPGPSSTTVPPPKKLNSQRNGSNLEPG). Residues 22 to 32 (LNSQRNGSNLE) show a composition bias toward polar residues. Residue H131 is the Nucleophile of the active site. K133 contributes to the substrate binding site. The segment at 266-269 (SIGS) is interaction with DNA. H356 acts as the Proton donor/acceptor in catalysis. K358 contributes to the substrate binding site.

Belongs to the tyrosyl-DNA phosphodiesterase family.

The protein localises to the nucleus. In terms of biological role, DNA repair enzyme that can remove a variety of covalent adducts from DNA through hydrolysis of a 3'-phosphodiester bond, giving rise to DNA with a free 3' phosphate. Catalyzes the hydrolysis of dead-end complexes between DNA and the topoisomerase I active site tyrosine residue. Hydrolyzes 3'-phosphoglycolates on protruding 3' ends on DNA double-strand breaks due to DNA damage by radiation and free radicals. Acts on blunt-ended double-strand DNA breaks and on single-stranded DNA. May have low 3'exonuclease activity and may be able to remove a single nucleoside from the 3'end of DNA and RNA molecules with 3'hydroxyl groups. Has no exonuclease activity towards DNA or RNA with a 3'phosphate. The polypeptide is Probable tyrosyl-DNA phosphodiesterase (Caenorhabditis elegans).